Consider the following 185-residue polypeptide: Kappa-casein (185 aa).

The N-terminal stretch at 1–20 is a signal peptide; sequence MKSFFLVVNILALTLPFLGA. Thr143 is a glycosylation site (O-linked (GalNAc...) threonine). Ser161 is subject to Phosphoserine; alternate. Ser161 carries O-linked (GalNAc...) serine; alternate glycosylation. Residue Thr178 is glycosylated (O-linked (GalNAc...) threonine). Ser179 carries the phosphoserine modification.

The protein belongs to the kappa-casein family. Mammary gland specific. Secreted in milk.

It is found in the secreted. Functionally, kappa-casein stabilizes micelle formation, preventing casein precipitation in milk. The polypeptide is Kappa-casein (CSN3) (Equus caballus (Horse)).